The primary structure comprises 176 residues: NAD(P)H-quinone oxidoreductase subunit J (176 aa).

The protein belongs to the complex I 30 kDa subunit family. As to quaternary structure, NDH-1 can be composed of about 15 different subunits; different subcomplexes with different compositions have been identified which probably have different functions.

It localises to the cell inner membrane. It catalyses the reaction a plastoquinone + NADH + (n+1) H(+)(in) = a plastoquinol + NAD(+) + n H(+)(out). It carries out the reaction a plastoquinone + NADPH + (n+1) H(+)(in) = a plastoquinol + NADP(+) + n H(+)(out). NDH-1 shuttles electrons from an unknown electron donor, via FMN and iron-sulfur (Fe-S) centers, to quinones in the respiratory and/or the photosynthetic chain. The immediate electron acceptor for the enzyme in this species is believed to be plastoquinone. Couples the redox reaction to proton translocation, and thus conserves the redox energy in a proton gradient. Cyanobacterial NDH-1 also plays a role in inorganic carbon-concentration. The sequence is that of NAD(P)H-quinone oxidoreductase subunit J from Gloeobacter violaceus (strain ATCC 29082 / PCC 7421).